Reading from the N-terminus, the 142-residue chain is Large ribosomal subunit protein bL21 (142 aa).

Residues 73–84 (KRRRQNSKRTRG) are compositionally biased toward basic residues. Positions 73–142 (KRRRQNSKRT…KAAAKAESAE (70 aa)) are disordered. Residues 107–125 (KAAEKKAPKADAAEGEAAK) are compositionally biased toward basic and acidic residues. Basic residues predominate over residues 126–135 (PKKAAPKKAA).

It belongs to the bacterial ribosomal protein bL21 family. As to quaternary structure, part of the 50S ribosomal subunit. Contacts protein L20.

Functionally, this protein binds to 23S rRNA in the presence of protein L20. The polypeptide is Large ribosomal subunit protein bL21 (Brucella canis (strain ATCC 23365 / NCTC 10854 / RM-666)).